The primary structure comprises 282 residues: Protoheme IX farnesyltransferase (282 aa).

The next 9 membrane-spanning stretches (helical) occupy residues Leu9–Ala29, Leu39–Phe59, Leu79–Leu99, Leu102–Val122, Val139–Ile159, Leu165–Leu185, Ile210–Ser230, Ala231–Ile251, and Val261–Met281.

This sequence belongs to the UbiA prenyltransferase family. Protoheme IX farnesyltransferase subfamily.

It is found in the cell inner membrane. The enzyme catalyses heme b + (2E,6E)-farnesyl diphosphate + H2O = Fe(II)-heme o + diphosphate. It participates in porphyrin-containing compound metabolism; heme O biosynthesis; heme O from protoheme: step 1/1. Its function is as follows. Converts heme B (protoheme IX) to heme O by substitution of the vinyl group on carbon 2 of heme B porphyrin ring with a hydroxyethyl farnesyl side group. This Francisella tularensis subsp. tularensis (strain FSC 198) protein is Protoheme IX farnesyltransferase.